The chain runs to 95 residues: Small ribosomal subunit protein uS19 (95 aa).

Belongs to the universal ribosomal protein uS19 family.

In terms of biological role, protein S19 forms a complex with S13 that binds strongly to the 16S ribosomal RNA. In Thermosipho melanesiensis (strain DSM 12029 / CIP 104789 / BI429), this protein is Small ribosomal subunit protein uS19.